The chain runs to 352 residues: Phosphate acyltransferase (352 aa).

It belongs to the PlsX family. Homodimer. Probably interacts with PlsY.

The protein localises to the cytoplasm. The enzyme catalyses a fatty acyl-[ACP] + phosphate = an acyl phosphate + holo-[ACP]. Its pathway is lipid metabolism; phospholipid metabolism. Catalyzes the reversible formation of acyl-phosphate (acyl-PO(4)) from acyl-[acyl-carrier-protein] (acyl-ACP). This enzyme utilizes acyl-ACP as fatty acyl donor, but not acyl-CoA. This Bordetella bronchiseptica (strain ATCC BAA-588 / NCTC 13252 / RB50) (Alcaligenes bronchisepticus) protein is Phosphate acyltransferase.